The chain runs to 402 residues: Nodal homolog 4-A (402 aa).

The N-terminal stretch at 1–18 is a signal peptide; the sequence is MHLYFYCLILLFVPGGNS. Residues 19 to 278 constitute a propeptide that is removed on maturation; sequence LGINSYLKHM…TIAHTRRHRR (260 aa). N37, N238, and N340 each carry an N-linked (GlcNAc...) asparagine glycan. 3 disulfide bridges follow: C302/C368, C331/C399, and C335/C401.

The protein belongs to the TGF-beta family. Homodimer; disulfide-linked. During blastula stages, expressed in the endoderm at a higher level dorsally than ventrally. Expressed in the deep cells of the Spemann organizer at the gastrula stage. Expressed in the notochord (a derivative of the organizer) and neural tube during the neural stages.

The protein localises to the secreted. Functionally, cooperation and regulatory loops of multiple nodals are essential for mesendoderm patterning in early embryos. Plays a role in mesoderm formation and may be required for neural development. This Xenopus laevis (African clawed frog) protein is Nodal homolog 4-A (nodal4-a).